We begin with the raw amino-acid sequence, 491 residues long: Cytochrome P450 monooxygenase olcB (491 aa).

A helical membrane pass occupies residues 5–27 (LLLSLSVCLLYVFITAFWNLYIH). Cysteine 435 provides a ligand contact to heme.

It belongs to the cytochrome P450 family. Heme is required as a cofactor.

It localises to the membrane. It functions in the pathway secondary metabolite biosynthesis; terpenoid biosynthesis. Cytochrome P450 monooxygenase; part of the gene cluster that mediates the biosynthesis of 15-deoxyoxalicine B. The first step of the pathway is the synthesis of nicotinyl-CoA from nicotinic acid by the nicotinic acid-CoA ligase olcI. Nicotinyl-CoA is then a substrate of polyketide synthase olcA to produce 4-hydroxy-6-(3-pyridinyl)-2H-pyran-2-one (HPPO) which is further prenylated by the polyprenyl transferase olcH to yield geranylgeranyl-HPPO. Geranylgeranyl pyrophosphate is provided by the cluster-specific geranylgeranyl pyrophosphate synthase olcC. The FAD-dependent monooxygenase olcE catalyzes the epoxidation of geranylgeranyl-HPPO and the terpene cyclase olcD catalyzes the cyclization of the terpenoid component, resulting in the formation of the tricyclic terpene moiety seen in predecaturin E. The cytochrome P450 monooxygenase then catalyzes the allylic oxidation of predecaturin E, which is followed by spirocylization with concomitant loss of one molecule of water to form decaturin E. Decaturin E is the substrate of the cytochrome P450 monooxygenase olcJ which hydroxylates it at the C-29 position to form decaturin F. The short-chain dehydrogenase/reductase olcF may catalyze the oxidation of decaturin F to generate the 29-hydroxyl-27-one intermediate, and subsequent hemiacetal formation probably leads to the formation of decaturin C. The dioxygenase olcK may be a peroxisomal enzyme that catalyzes the hydroxylation of decaturin C into decaturin A once decaturin C is shuttled into the peroxisome by the MFS transporter olcL. Finally the cytochrome P450 monooxygenase olcB catalyzes the oxidative rearrangement to yield 15-deoxyoxalicine B. In the absence of olcJ, decaturin E may be shunted to a pathway in which it is oxidized to a ketone, possibly by olcF, to form decaturin D, which undergoes further allylic oxidation to yield decaturin G. Moreover, in the absence of oclK or oclL, oclB can convert decaturin C into 15-deoxyoxalicine A. The polypeptide is Cytochrome P450 monooxygenase olcB (Penicillium canescens).